A 311-amino-acid chain; its full sequence is tRNA-cytidine(32) 2-sulfurtransferase (311 aa).

Positions 47–52 (SGGKDS) match the PP-loop motif motif. Positions 122, 125, and 213 each coordinate [4Fe-4S] cluster.

The protein belongs to the TtcA family. Homodimer. The cofactor is Mg(2+). Requires [4Fe-4S] cluster as cofactor.

Its subcellular location is the cytoplasm. It catalyses the reaction cytidine(32) in tRNA + S-sulfanyl-L-cysteinyl-[cysteine desulfurase] + AH2 + ATP = 2-thiocytidine(32) in tRNA + L-cysteinyl-[cysteine desulfurase] + A + AMP + diphosphate + H(+). It functions in the pathway tRNA modification. Its function is as follows. Catalyzes the ATP-dependent 2-thiolation of cytidine in position 32 of tRNA, to form 2-thiocytidine (s(2)C32). The sulfur atoms are provided by the cysteine/cysteine desulfurase (IscS) system. This Escherichia coli O127:H6 (strain E2348/69 / EPEC) protein is tRNA-cytidine(32) 2-sulfurtransferase.